A 335-amino-acid chain; its full sequence is Type 1 fimbrin D-mannose specific adhesin (335 aa).

Residues 1 to 22 (MKIYSALLLAGTALFFTHPALA) form the signal peptide.

It belongs to the fimbrial protein family.

The protein localises to the fimbrium. Its function is as follows. Involved in regulation of length and mediation of adhesion of type 1 fimbriae (but not necessary for the production of fimbriae). A mannose-binding adhesin. The sequence is that of Type 1 fimbrin D-mannose specific adhesin (fimH) from Salmonella typhimurium (strain LT2 / SGSC1412 / ATCC 700720).